Consider the following 311-residue polypeptide: Olfactory receptor-like protein OLF1 (311 aa).

Topologically, residues 1 to 24 are extracellular; that stretch reads MDGNYTLVTEFILLGFPTRPELQI. N4 is a glycosylation site (N-linked (GlcNAc...) asparagine). A helical membrane pass occupies residues 25-48; it reads VLFLVFLTLYGIILTGNIGLMMLI. Over 49-56 the chain is Cytoplasmic; the sequence is RTDPHLQT. The helical transmembrane segment at 57 to 78 threads the bilayer; that stretch reads PMYFFLSNLSFADLCFSSAIVP. The Extracellular segment spans residues 79 to 99; that stretch reads KMLVNFLSENKSISLYGCALQ. Residues 100 to 119 traverse the membrane as a helical segment; it reads FYFSCAFADTESFILAAMAY. Over 120-138 the chain is Cytoplasmic; sequence DRYVAICNPLLYTVVMSRG. A helical membrane pass occupies residues 139 to 157; the sequence is ICVWLIVLSYIGGNMSSLV. At 158–195 the chain is on the extracellular side; that stretch reads HTSFAFILKYCDKNVINHFFCDLPPLLKLSCTDTSVNE. A helical transmembrane segment spans residues 196-218; the sequence is WLLSTYGSSVEIFCFIVIVISYY. Residues 219–235 lie on the Cytoplasmic side of the membrane; sequence FILRSVLRIRSSSGRKK. Residues 236 to 259 traverse the membrane as a helical segment; it reads TFSTCASHLTSVAIYQGTLLFIYS. The Extracellular portion of the chain corresponds to 260 to 271; sequence RPTYLYTPNTDK. A helical membrane pass occupies residues 272–291; sequence IISVFYTIIIPVLNPLIYSL. Residues 292-311 are Cytoplasmic-facing; sequence RNKDVKDAAKRAVRLKVDSS.

The protein belongs to the G-protein coupled receptor 1 family.

The protein localises to the cell membrane. Its function is as follows. Putative odorant or sperm cell receptor. The polypeptide is Olfactory receptor-like protein OLF1 (Canis lupus familiaris (Dog)).